The following is a 296-amino-acid chain: Phosphatidylglycerol--prolipoprotein diacylglyceryl transferase (296 aa).

4 helical membrane-spanning segments follow: residues 10 to 30, 57 to 77, 92 to 112, and 119 to 139; these read IAFSLGPVQVHWYGLMYLAAF, LLFYGMLGVVLGGRIGYMLFY, VWEGGMSFHGGLLGVLIACWL, and LHFFDVMDFVAPLVPLGLGFG. Arg140 is a binding site for a 1,2-diacyl-sn-glycero-3-phospho-(1'-sn-glycerol). 3 consecutive transmembrane segments (helical) span residues 194 to 214, 220 to 240, and 254 to 274; these read QLYEAALEGVVMFVVLWTFSM, YAVSGLFALLYGVFRFIVEFV, and WLTMGQILSLPLVAVGLVLLA.

It belongs to the Lgt family.

Its subcellular location is the cell inner membrane. It catalyses the reaction L-cysteinyl-[prolipoprotein] + a 1,2-diacyl-sn-glycero-3-phospho-(1'-sn-glycerol) = an S-1,2-diacyl-sn-glyceryl-L-cysteinyl-[prolipoprotein] + sn-glycerol 1-phosphate + H(+). It functions in the pathway protein modification; lipoprotein biosynthesis (diacylglyceryl transfer). In terms of biological role, catalyzes the transfer of the diacylglyceryl group from phosphatidylglycerol to the sulfhydryl group of the N-terminal cysteine of a prolipoprotein, the first step in the formation of mature lipoproteins. This is Phosphatidylglycerol--prolipoprotein diacylglyceryl transferase from Xanthomonas axonopodis pv. citri (strain 306).